The following is a 158-amino-acid chain: NAD(P)H-quinone oxidoreductase subunit J, chloroplastic (158 aa).

Belongs to the complex I 30 kDa subunit family. In terms of assembly, NDH is composed of at least 16 different subunits, 5 of which are encoded in the nucleus.

It is found in the plastid. The protein resides in the chloroplast thylakoid membrane. The enzyme catalyses a plastoquinone + NADH + (n+1) H(+)(in) = a plastoquinol + NAD(+) + n H(+)(out). It carries out the reaction a plastoquinone + NADPH + (n+1) H(+)(in) = a plastoquinol + NADP(+) + n H(+)(out). NDH shuttles electrons from NAD(P)H:plastoquinone, via FMN and iron-sulfur (Fe-S) centers, to quinones in the photosynthetic chain and possibly in a chloroplast respiratory chain. The immediate electron acceptor for the enzyme in this species is believed to be plastoquinone. Couples the redox reaction to proton translocation, and thus conserves the redox energy in a proton gradient. The polypeptide is NAD(P)H-quinone oxidoreductase subunit J, chloroplastic (Aethionema grandiflorum (Persian stone-cress)).